Consider the following 462-residue polypeptide: uncharacterized protein (462 aa).

Residues 405 to 462 are disordered; it reads QPIGNNKSSPMKREFTAMEEDKTETGDIFKLLSQQKPAKGAKSKSKKYKKTEEDLSAV. Residues 415-431 show a composition bias toward basic and acidic residues; the sequence is MKREFTAMEEDKTETGD. The span at 443-453 shows a compositional bias: basic residues; the sequence is KGAKSKSKKYK.

This is an uncharacterized protein from Magallana gigas (Pacific oyster).